The primary structure comprises 108 residues: T cell receptor alpha variable 1-1 (108 aa).

The N-terminal stretch at 1–18 (MWGAFLLYVSMKMGGTAG) is a signal peptide. An Ig-like domain is found at 19-108 (QSLEQPSEVT…DSASYFCAVR (90 aa)). Asparagine 38 is a glycosylation site (N-linked (GlcNAc...) asparagine). Residues cysteine 39 and cysteine 105 are joined by a disulfide bond.

Alpha-beta TR is a heterodimer composed of an alpha and beta chain; disulfide-linked. The alpha-beta TR is associated with the transmembrane signaling CD3 coreceptor proteins to form the TR-CD3 (TcR or TCR). The assembly of alpha-beta TR heterodimers with CD3 occurs in the endoplasmic reticulum where a single alpha-beta TR heterodimer associates with one CD3D-CD3E heterodimer, one CD3G-CD3E heterodimer and one CD247 homodimer forming a stable octameric structure. CD3D-CD3E and CD3G-CD3E heterodimers preferentially associate with TR alpha and TR beta chains, respectively. The association of the CD247 homodimer is the last step of TcR assembly in the endoplasmic reticulum and is required for transport to the cell surface.

It is found in the cell membrane. Functionally, v region of the variable domain of T cell receptor (TR) alpha chain that participates in the antigen recognition. Alpha-beta T cell receptors are antigen specific receptors which are essential to the immune response and are present on the cell surface of T lymphocytes. Recognize peptide-major histocompatibility (MH) (pMH) complexes that are displayed by antigen presenting cells (APC), a prerequisite for efficient T cell adaptive immunity against pathogens. Binding of alpha-beta TR to pMH complex initiates TR-CD3 clustering on the cell surface and intracellular activation of LCK that phosphorylates the ITAM motifs of CD3G, CD3D, CD3E and CD247 enabling the recruitment of ZAP70. In turn ZAP70 phosphorylates LAT, which recruits numerous signaling molecules to form the LAT signalosome. The LAT signalosome propagates signal branching to three major signaling pathways, the calcium, the mitogen-activated protein kinase (MAPK) kinase and the nuclear factor NF-kappa-B (NF-kB) pathways, leading to the mobilization of transcription factors that are critical for gene expression and essential for T cell growth and differentiation. The T cell repertoire is generated in the thymus, by V-(D)-J rearrangement. This repertoire is then shaped by intrathymic selection events to generate a peripheral T cell pool of self-MH restricted, non-autoaggressive T cells. Post-thymic interaction of alpha-beta TR with the pMH complexes shapes TR structural and functional avidity. The chain is T cell receptor alpha variable 1-1 from Homo sapiens (Human).